A 319-amino-acid chain; its full sequence is Putative GPI-anchor transamidase (319 aa).

Positions 1–16 are cleaved as a signal peptide; the sequence is MRHVLLIFCAIIATEA. Active-site residues include His-156 and Cys-198. A glycan (N-linked (GlcNAc...) asparagine) is linked at Asn-257.

This sequence belongs to the peptidase C13 family.

Its pathway is glycolipid biosynthesis; glycosylphosphatidylinositol-anchor biosynthesis. Functionally, mediates GPI anchoring in the endoplasmic reticulum, by replacing a protein's C-terminal GPI attachment signal peptide with a pre-assembled GPI. During this transamidation reaction, the GPI transamidase forms a carbonyl intermediate with the substrate protein. This Caenorhabditis elegans protein is Putative GPI-anchor transamidase.